The sequence spans 626 residues: Carnitine O-acetyltransferase (626 aa).

Position 93 is an N6-succinyllysine (Lys-93). The residue at position 261 (Lys-261) is an N6-acetyllysine; alternate. Residue Lys-261 is modified to N6-succinyllysine; alternate. Lys-268 carries the post-translational modification N6-acetyllysine. His-343 acts as the Proton acceptor in catalysis. CoA contacts are provided by residues Lys-419 and Lys-423–Asp-430. 2 residues coordinate (R)-carnitine: Tyr-452 and Ser-454. Residue Ser-456 coordinates CoA. Thr-465 serves as a coordination point for (R)-carnitine. Residues Arg-504 and Gln-555 each coordinate CoA. A Microbody targeting signal motif is present at residues Ala-624–Leu-626.

Belongs to the carnitine/choline acetyltransferase family. In terms of assembly, monomer. Expressed in flagella of epididymal sperm.

It is found in the endoplasmic reticulum. It localises to the peroxisome. The protein localises to the mitochondrion inner membrane. The enzyme catalyses (R)-carnitine + acetyl-CoA = O-acetyl-(R)-carnitine + CoA. It catalyses the reaction propanoyl-CoA + (R)-carnitine = O-propanoyl-(R)-carnitine + CoA. It carries out the reaction butanoyl-CoA + (R)-carnitine = O-butanoyl-(R)-carnitine + CoA. The catalysed reaction is hexanoyl-CoA + (R)-carnitine = O-hexanoyl-(R)-carnitine + CoA. The enzyme catalyses octanoyl-CoA + (R)-carnitine = O-octanoyl-(R)-carnitine + CoA. It catalyses the reaction decanoyl-CoA + (R)-carnitine = O-decanoyl-(R)-carnitine + CoA. It carries out the reaction 3-methylbutanoyl-CoA + (R)-carnitine = O-3-methylbutanoyl-(R)-carnitine + CoA. The catalysed reaction is 2-methylpropanoyl-CoA + (R)-carnitine = O-isobutanoyl-(R)-carnitine + CoA. The enzyme catalyses 2-methylbutanoyl-CoA + (R)-carnitine = O-2-methylbutanoyl-(R)-carnitine + CoA. It catalyses the reaction acetoacetyl-CoA + (R)-carnitine = O-3-oxobutanoyl-(R)-carnitine + CoA. It carries out the reaction 3-hydroxybutanoyl-CoA + (R)-carnitine = O-3-hydroxybutanoyl-(R)-carnitine + CoA. The catalysed reaction is 4,8-dimethylnonanoyl-CoA + (R)-carnitine = O-4,8-dimethylnonanoyl-(R)-carnitine + CoA. The enzyme catalyses 2,6-dimethylheptanoyl-CoA + (R)-carnitine = O-2,6-dimethylheptanoyl-(R)-carnitine + CoA. Its function is as follows. Catalyzes the reversible transfer of acyl groups from carnitine to coenzyme A (CoA) and regulates the acyl-CoA/CoA ratio. Also plays a crucial role in the transport of fatty acids for beta-oxidation. Responsible for the synthesis of short- and branched-chain acylcarnitines. Active towards some branched-chain amino acid oxidation pathway (BCAAO) intermediates. Trans-2-enoyl-CoAs and 2-methylacyl-CoAs are poor substrates. This is Carnitine O-acetyltransferase from Rattus norvegicus (Rat).